The primary structure comprises 353 residues: Holliday junction branch migration complex subunit RuvB (353 aa).

A large ATPase domain (RuvB-L) region spans residues 4 to 186 (ADRLIAATHS…FGIVQRLEFY (183 aa)). ATP contacts are provided by residues Ile-25, Arg-26, Gly-67, Lys-70, Thr-71, Thr-72, 133 to 135 (EDF), Arg-176, Tyr-186, and Arg-223. Position 71 (Thr-71) interacts with Mg(2+). The tract at residues 187-257 (STADLATIVS…VADLALNLLD (71 aa)) is small ATPAse domain (RuvB-S). The interval 260–353 (EHGFDHQDRR…VDEFLDAVDD (94 aa)) is head domain (RuvB-H). DNA-binding residues include Arg-296, Arg-315, and Arg-320.

It belongs to the RuvB family. In terms of assembly, homohexamer. Forms an RuvA(8)-RuvB(12)-Holliday junction (HJ) complex. HJ DNA is sandwiched between 2 RuvA tetramers; dsDNA enters through RuvA and exits via RuvB. An RuvB hexamer assembles on each DNA strand where it exits the tetramer. Each RuvB hexamer is contacted by two RuvA subunits (via domain III) on 2 adjacent RuvB subunits; this complex drives branch migration. In the full resolvosome a probable DNA-RuvA(4)-RuvB(12)-RuvC(2) complex forms which resolves the HJ.

The protein localises to the cytoplasm. The catalysed reaction is ATP + H2O = ADP + phosphate + H(+). Its function is as follows. The RuvA-RuvB-RuvC complex processes Holliday junction (HJ) DNA during genetic recombination and DNA repair, while the RuvA-RuvB complex plays an important role in the rescue of blocked DNA replication forks via replication fork reversal (RFR). RuvA specifically binds to HJ cruciform DNA, conferring on it an open structure. The RuvB hexamer acts as an ATP-dependent pump, pulling dsDNA into and through the RuvAB complex. RuvB forms 2 homohexamers on either side of HJ DNA bound by 1 or 2 RuvA tetramers; 4 subunits per hexamer contact DNA at a time. Coordinated motions by a converter formed by DNA-disengaged RuvB subunits stimulates ATP hydrolysis and nucleotide exchange. Immobilization of the converter enables RuvB to convert the ATP-contained energy into a lever motion, pulling 2 nucleotides of DNA out of the RuvA tetramer per ATP hydrolyzed, thus driving DNA branch migration. The RuvB motors rotate together with the DNA substrate, which together with the progressing nucleotide cycle form the mechanistic basis for DNA recombination by continuous HJ branch migration. Branch migration allows RuvC to scan DNA until it finds its consensus sequence, where it cleaves and resolves cruciform DNA. The polypeptide is Holliday junction branch migration complex subunit RuvB (Pseudomonas fluorescens (strain Pf0-1)).